The chain runs to 153 residues: 6,7-dimethyl-8-ribityllumazine synthase (153 aa).

5-amino-6-(D-ribitylamino)uracil-binding positions include Phe-22, 56–58, and 80–82; these read AFE and TVI. 85–86 contributes to the (2S)-2-hydroxy-3-oxobutyl phosphate binding site; it reads AT. His-88 (proton donor) is an active-site residue. Phe-113 lines the 5-amino-6-(D-ribitylamino)uracil pocket. Arg-127 contacts (2S)-2-hydroxy-3-oxobutyl phosphate.

It belongs to the DMRL synthase family.

It carries out the reaction (2S)-2-hydroxy-3-oxobutyl phosphate + 5-amino-6-(D-ribitylamino)uracil = 6,7-dimethyl-8-(1-D-ribityl)lumazine + phosphate + 2 H2O + H(+). It participates in cofactor biosynthesis; riboflavin biosynthesis; riboflavin from 2-hydroxy-3-oxobutyl phosphate and 5-amino-6-(D-ribitylamino)uracil: step 1/2. Its function is as follows. Catalyzes the formation of 6,7-dimethyl-8-ribityllumazine by condensation of 5-amino-6-(D-ribitylamino)uracil with 3,4-dihydroxy-2-butanone 4-phosphate. This is the penultimate step in the biosynthesis of riboflavin. The chain is 6,7-dimethyl-8-ribityllumazine synthase from Clostridium perfringens (strain 13 / Type A).